The following is a 185-amino-acid chain: Elongation factor P (185 aa).

The protein belongs to the elongation factor P family.

It localises to the cytoplasm. The protein operates within protein biosynthesis; polypeptide chain elongation. Functionally, involved in peptide bond synthesis. Stimulates efficient translation and peptide-bond synthesis on native or reconstituted 70S ribosomes in vitro. Probably functions indirectly by altering the affinity of the ribosome for aminoacyl-tRNA, thus increasing their reactivity as acceptors for peptidyl transferase. The sequence is that of Elongation factor P from Agathobacter rectalis (strain ATCC 33656 / DSM 3377 / JCM 17463 / KCTC 5835 / VPI 0990) (Eubacterium rectale).